Here is a 455-residue protein sequence, read N- to C-terminus: Alpha-1,3/1,6-mannosyltransferase ALG2 (455 aa).

Residues 73 to 95 (FGRFYILCAILRQFVLVASLILW) form a helical membrane-spanning segment. N-linked (GlcNAc...) asparagine glycosylation occurs at Asn138. Residues 434–453 (GAVYLLGAIGVLFACIIYCI) form a helical membrane-spanning segment.

It belongs to the glycosyltransferase group 1 family. Glycosyltransferase 4 subfamily.

Its subcellular location is the endoplasmic reticulum membrane. It catalyses the reaction a beta-D-Man-(1-&gt;4)-beta-D-GlcNAc-(1-&gt;4)-alpha-D-GlcNAc-diphospho-di-trans,poly-cis-dolichol + GDP-alpha-D-mannose = an alpha-D-Man-(1-&gt;3)-beta-D-Man-(1-&gt;4)-beta-D-GlcNAc-(1-&gt;4)-alpha-D-GlcNAc-diphospho-di-trans,poly-cis-dolichol + GDP + H(+). The catalysed reaction is an alpha-D-Man-(1-&gt;3)-beta-D-Man-(1-&gt;4)-beta-D-GlcNAc-(1-&gt;4)-alpha-D-GlcNAc-diphospho-di-trans,poly-cis-dolichol + GDP-alpha-D-mannose = an alpha-D-Man-(1-&gt;3)-[alpha-D-Man-(1-&gt;6)]-beta-D-Man-(1-&gt;4)-beta-D-GlcNAc-(1-&gt;4)-alpha-D-GlcNAc-diphospho-di-trans,poly-cis-dolichol + GDP + H(+). It functions in the pathway protein modification; protein glycosylation. Mannosylates Man(2)GlcNAc(2)-dolichol diphosphate and Man(1)GlcNAc(2)-dolichol diphosphate to form Man(3)GlcNAc(2)-dolichol diphosphate. This chain is Alpha-1,3/1,6-mannosyltransferase ALG2 (ALG2), found in Rhizomucor pusillus.